The chain runs to 782 residues: MASKSDKQVTVEVNNNGRSRSKSRARSQSRGRGRSVKITVNSHNKGRRQNGRNKYQSNQRVRKIVNKQLRKQGVTGPKPAICQTATATLGTIGSNTTGATEIEACILLNPVLVKDATGSTQFGPVQALGAQYSMWKLKYLNVRLTSMVGASAVNGTVVRISLNPTSTPSSTSWSGLGARKHLDVTVGKNAVFKLKPSDLGGPRDGWWLTNTNDNASDTLGPSIEIHTLGQTMSSYQNTQFTGGLFLVELSSAWCFTGYAANPNLVNLVKSTDKSVNVTFEGSAGTPLIMNVPEHSHFARTAVEHSSLSTSLSRAGGESSSDTVWQVLNTAVSAAELVTPPPFNWLVKGGWWFVKLIAGRARTGARRFYVYLSYQDALSNKPALCTGGVPASARQSNPVRTTLQFTQMNQPSLGHGATPMTFGRSIPEPGEQFRVLLTVGPPMAPNTANSQNWVNKTIVPPENQYTVKIGIDLEHYTTMQGFTPVESVSWYTADFQPSDEPSPIPGLYARVNNTKKADVYGVQQFKSSHTNNRHQITSVFLVRVTTSFQVINYTSYFIRGAESGSNVSNLKIRDQTYHTPLQFTQGKWYLLTSTVMHDGPTSSGWVWMNQELTNNIAYRVDPGMMYLITPPPAASQLYFELHTVLPQARSEEPETYVDAPLPEEPPIEEEETDSDFESTEDENDEVDRFDLHPSSESDDDDVENDRATLLSTLLNQGISVERATRITNGAFPTRAARVRRSVYNDLLVSGLSPGAAWSHACEQARRAGDNHDLQLSGSRDHAE.

Residues 1–59 form a disordered region; that stretch reads MASKSDKQVTVEVNNNGRSRSKSRARSQSRGRGRSVKITVNSHNKGRRQNGRNKYQSNQ. Residues 1 to 70 form a basic region; that stretch reads MASKSDKQVT…VRKIVNKQLR (70 aa). Over residues 19 to 35 the composition is skewed to basic residues; that stretch reads SRSKSRARSQSRGRGRS. An inner core region spans residues 71–263; the sequence is KQGVTGPKPA…CFTGYAANPN (193 aa). Residues 274 to 313 are lipid disruption activity; the sequence is SVNVTFEGSAGTPLIMNVPEHSHFARTAVEHSSLSTSLSR. The tract at residues 394–423 is core attachment; that stretch reads QSNPVRTTLQFTQMNQPSLGHGATPMTFGR. Positions 424–648 are P2 globular domain; sequence SIPEPGEQFR…ELHTVLPQAR (225 aa). The segment at 648–702 is disordered; sequence RSEEPETYVDAPLPEEPPIEEEETDSDFESTEDENDEVDRFDLHPSSESDDDDVE. An acidic region spans residues 649–782; sequence SEEPETYVDA…QLSGSRDHAE (134 aa). A compositionally biased stretch (acidic residues) spans 664 to 684; sequence PPIEEEETDSDFESTEDENDE. The segment covering 685–694 has biased composition (basic and acidic residues); it reads VDRFDLHPSS.

This sequence belongs to the astroviridae capsid polyprotein family. In terms of assembly, heterodimer with spike protein VP25. The spikes form a globular dimer with 30 spikes covering the mature virion. Spike protein VP25 that lacks the core attachment region may need to dimerize with spike protein VP27 to remain stably bound to the viral particle. Heterodimer with spike protein VP27. The spikes form a globular dimer with 30 spikes covering the mature virion. Spike protein VP25 that lacks the core attachment region may need to dimerize with spike protein VP27 to remain stably bound to the viral particle. Interacts with host PDIA4; this interaction seems to facilitate the uncoating during virus entry into the host cell. In terms of processing, specific enzymatic cleavages by the host yield mature proteins. VP90 acidic C-terminal domain is eliminated from the immature virion by host caspases during viral maturation giving rise to virions composed of VP70. The virus can then dissociate from cellular membranes and exit the cell. Further cleavages by host extracellular proteases occur resulting in the three structural proteins VP34, VP27 and VP25 and conferring infectivity.

The protein resides in the virion. Its subcellular location is the host extracellular space. In terms of biological role, the capsid polyprotein VP90 self-assembles and undergoes a proteolytic cleavage by host caspases to yield the immature VP70 virion. Functionally, the immature virion is composed of 180 VP70 subunits with 90 dimeric spikes and displays a T=3 icosahedral symmetry. During maturation, VP70 undergoes a loss of 60 peripentonal spikes, which likely plays an important role in viral infectivity. Its function is as follows. Self-assembles to form an icosahedral capsid with a T=3 symmetry, about 43 nm in diameter. This forms contains only 30 spikes located on the icosahedral 2-fold axes. VP25 and VP27 Forms the spikes at the surface of the virion. This forms contains only 30 spikes located on the icosahedral 2-fold axes. Plays a role in the attachment to target host cell. This attachment induces virion internalization through clathrin-dependent endocytosis. In terms of biological role, VP25 and VP27 Forms the spikes at the surface of the virion. This forms contains only 30 spikes located on the icosahedral 2-fold axes. Plays a role in the attachment to target host cell. This attachment induces virion internalization through clathrin-dependent endocytosis. The polypeptide is Capsid polyprotein VP90 (Human astrovirus-8 (HAstV-8)).